The following is a 21-amino-acid chain: Protein YadW (21 aa).

In Escherichia coli (strain K12), this protein is Protein YadW.